The primary structure comprises 670 residues: Penicillin-binding protein activator LpoA (670 aa).

A signal peptide spans 1–26 (MLPSKVVHRKAVRTVPLLLAALIFAG). Cys27 carries the N-palmitoyl cysteine lipid modification. Cys27 carries the S-diacylglycerol cysteine lipid modification.

Belongs to the LpoA family. As to quaternary structure, interacts with PBP1a.

Its subcellular location is the cell outer membrane. Regulator of peptidoglycan synthesis that is essential for the function of penicillin-binding protein 1A (PBP1a). In Erwinia tasmaniensis (strain DSM 17950 / CFBP 7177 / CIP 109463 / NCPPB 4357 / Et1/99), this protein is Penicillin-binding protein activator LpoA.